The sequence spans 389 residues: 8-amino-7-oxononanoate synthase (389 aa).

Arg-19 is a binding site for substrate. 106 to 107 (GY) serves as a coordination point for pyridoxal 5'-phosphate. His-131 is a binding site for substrate. Residues Ser-176, His-204, and Thr-233 each contribute to the pyridoxal 5'-phosphate site. Residue Lys-236 is modified to N6-(pyridoxal phosphate)lysine. A substrate-binding site is contributed by Thr-350.

This sequence belongs to the class-II pyridoxal-phosphate-dependent aminotransferase family. BioF subfamily. In terms of assembly, homodimer. It depends on pyridoxal 5'-phosphate as a cofactor.

The enzyme catalyses 6-carboxyhexanoyl-[ACP] + L-alanine + H(+) = (8S)-8-amino-7-oxononanoate + holo-[ACP] + CO2. The protein operates within cofactor biosynthesis; biotin biosynthesis. Its function is as follows. Catalyzes the decarboxylative condensation of pimeloyl-[acyl-carrier protein] and L-alanine to produce 8-amino-7-oxononanoate (AON), [acyl-carrier protein], and carbon dioxide. The polypeptide is 8-amino-7-oxononanoate synthase (Ectopseudomonas mendocina (strain ymp) (Pseudomonas mendocina)).